The following is a 505-amino-acid chain: Glucan endo-1,3-beta-glucosidase 4 (505 aa).

Residues 1–23 (MLLPRWFAEALLLLLSILACSNA) form the signal peptide. Asn-70 and Asn-110 each carry an N-linked (GlcNAc...) asparagine glycan. Catalysis depends on Glu-119, which acts as the Proton donor. Asn-178 and Asn-256 each carry an N-linked (GlcNAc...) asparagine glycan. Glu-266 functions as the Nucleophile in the catalytic mechanism. Residues Asn-298, Asn-338, and Asn-357 are each glycosylated (N-linked (GlcNAc...) asparagine). Cysteines 363 and 426 form a disulfide. N-linked (GlcNAc...) asparagine glycosylation is present at Asn-453. Residue Ala-474 is the site of GPI-anchor amidated alanine attachment. Residues 475 to 505 (NARIIFSYHLPILAPLALTLLQLLLQHDRLL) constitute a propeptide, removed in mature form.

The protein belongs to the glycosyl hydrolase 17 family. Post-translationally, contains two additional disulfide bonds.

Its subcellular location is the cell membrane. The enzyme catalyses Hydrolysis of (1-&gt;3)-beta-D-glucosidic linkages in (1-&gt;3)-beta-D-glucans.. This is Glucan endo-1,3-beta-glucosidase 4 from Arabidopsis thaliana (Mouse-ear cress).